Consider the following 490-residue polypeptide: MVSAAAGWAAPAFAVAAVVIWVVLCGELLRRRRRGAGSGKGDAAAAARLPPGSFGWPVVGETLEFVSCAYSPRPEAFVDKRRKLHGSAVFRSHLFGSATVVTADAEVSRFVLQSDARAFVPWYPRSLTELMGKSSILLINGALQRRVHGLVGAFFKSSHLKSQLTADMRRRLSPALSSFPDSSLLHVQHLAKSVVFEILVRGLIGLEAGEEMQQLKQQFQEFIVGLMSLPIKLPGTRLYRSLQAKKKMARLIQRIIREKRARRAAASLPRDAIDMLIGDGSDELTDELISDNMIDLMIPAEDSVPVLITLAVKFLSECPLALHQLEEENIQLKRRKTDMGETLQWTDYMSLSFTQHVITETLRLGNIIGGIMRKAVRDVEVKGHLIPKGWCVFVYFRSVHLDDTLYDEPYKFNPWRWKEKDMSNGSFTPFGGGQRLCPGLDLARLEASIFLHHLVTSFRWVAEEDHIVNFPTVRLKRGMPIRVTAKEDDD.

The helical transmembrane segment at 4–24 threads the bilayer; that stretch reads AAAGWAAPAFAVAAVVIWVVL. Residue C437 coordinates heme.

The protein belongs to the cytochrome P450 family. Heme is required as a cofactor.

It localises to the membrane. The enzyme catalyses 6-deoxoteasterone + reduced [NADPH--hemoprotein reductase] + O2 = 3-dehydro-6-deoxoteasterone + oxidized [NADPH--hemoprotein reductase] + 2 H2O + H(+). It functions in the pathway plant hormone biosynthesis; brassinosteroid biosynthesis. Its function is as follows. Catalyzes the C6-oxidation step in brassinosteroids biosynthesis. May convert 6-deoxoteasterone (6-deoxoTE) to 3-dehydro-6-deoxoteasterone (6-deoxo3DT, 6-deoxo3DHT), and teasterone (TE) to 3-dehydroteasterone (3DT, 3-DHT). Involved in the elongation of leaf sheaths and stems. The protein is Cytochrome P450 90D2 of Oryza sativa subsp. indica (Rice).